Reading from the N-terminus, the 53-residue chain is Beta-defensin C7 (53 aa).

3 disulfides stabilise this stretch: C20/C49, C27/C42, and C32/C50.

Belongs to the beta-defensin family.

The protein resides in the secreted. In terms of biological role, has bactericidal activity. In Bos taurus (Bovine), this protein is Beta-defensin C7.